Here is a 513-residue protein sequence, read N- to C-terminus: Histidine ammonia-lyase (513 aa).

The segment at residues 145–147 (ASG) is a cross-link (5-imidazolinone (Ala-Gly)). 2,3-didehydroalanine (Ser) is present on Ser146.

This sequence belongs to the PAL/histidase family. Post-translationally, contains an active site 4-methylidene-imidazol-5-one (MIO), which is formed autocatalytically by cyclization and dehydration of residues Ala-Ser-Gly.

Its subcellular location is the cytoplasm. It catalyses the reaction L-histidine = trans-urocanate + NH4(+). The protein operates within amino-acid degradation; L-histidine degradation into L-glutamate; N-formimidoyl-L-glutamate from L-histidine: step 1/3. In Vibrio vulnificus (strain YJ016), this protein is Histidine ammonia-lyase.